The primary structure comprises 219 residues: Ribonuclease HII (219 aa).

An RNase H type-2 domain is found at 22-219; sequence GLVAGVDEVG…LLAMRMEAVV (198 aa). A divalent metal cation-binding residues include aspartate 28, glutamate 29, and aspartate 125.

This sequence belongs to the RNase HII family. The cofactor is Mn(2+). Mg(2+) is required as a cofactor.

It localises to the cytoplasm. The catalysed reaction is Endonucleolytic cleavage to 5'-phosphomonoester.. Its function is as follows. Endonuclease that specifically degrades the RNA of RNA-DNA hybrids. The chain is Ribonuclease HII from Granulibacter bethesdensis (strain ATCC BAA-1260 / CGDNIH1).